Reading from the N-terminus, the 215-residue chain is Small ribosomal subunit protein uS3c (215 aa).

Positions 43–116 (IKNYIKKNMK…KLNMAITRIA (74 aa)) constitute a KH type-2 domain.

It belongs to the universal ribosomal protein uS3 family. In terms of assembly, part of the 30S ribosomal subunit.

It localises to the plastid. The protein localises to the chloroplast. The polypeptide is Small ribosomal subunit protein uS3c (rps3) (Morus indica (Mulberry)).